A 724-amino-acid polypeptide reads, in one-letter code: Cyclin-T1 (724 aa).

Position 117 is a phosphoserine (Ser-117). The Nuclear localization signal motif lies at 253–270; that stretch reads KRIRNWRAYQAAMKTKPD. A Glycyl lysine isopeptide (Lys-Gly) (interchain with G-Cter in SUMO2) cross-link involves residue Lys-342. A coiled-coil region spans residues 384–425; it reads SAKVSLKEYRAKHAEELAAQKRQLENMEANVKSQYAYAAQNL. Position 388 is a phosphoserine (Ser-388). Lys-390 carries the N6-acetyllysine modification. Residue Lys-415 forms a Glycyl lysine isopeptide (Lys-Gly) (interchain with G-Cter in SUMO2) linkage. Ser-416, Ser-473, and Ser-474 each carry ADP-ribosylserine. The segment at 479–549 is histidine-rich domain (HRD); the sequence is IKMRIKVHSA…RPSDPKHSSQ (71 aa). Residue Lys-480 forms a Glycyl lysine isopeptide (Lys-Gly) (interchain with G-Cter in SUMO2) linkage. Residues 483 to 507 show a composition bias toward basic and acidic residues; that stretch reads IKVHSAGDKHNSIEDSVTKSREHKE. Disordered regions lie at residues 483–586 and 691–724; these read IKVH…VFDH and PRAG…PLPK. N6-(ADP-ribosyl)lysine is present on Lys-484. Residue His-486 is modified to ADP-ribosylhistidine. A phosphoserine mark is found at Ser-494 and Ser-498. Basic residues predominate over residues 508-529; the sequence is KQRTHPSNHHHHHNHHSHRHSH. At His-529 the chain carries ADP-ribosylhistidine. An ADP-ribosylserine mark is found at Ser-548 and Ser-551. At His-555 the chain carries ADP-ribosylhistidine. Positions 559–569 are enriched in low complexity; the sequence is SLSSTLSSSSS. Ser-562 carries the post-translational modification ADP-ribosylserine. Residues 708–724 show a composition bias toward pro residues; sequence PPPLPSEPPPPLPPLPK.

The protein belongs to the cyclin family. Cyclin C subfamily. In terms of assembly, cyclin-T1 is the predominant cyclin that associates with CDK9 to form a heterodimer called P-TEFb. P-TEFb forms a complex with AFF4/AF5Q31. Component of a complex which is at least composed of HTATSF1/Tat-SF1, P-TEFb complex, RNA pol II, SUPT5H, and NCL/nucleolin. Component of the 7SK snRNP complex at least composed of P-TEFb (composed of CDK9 and CCNT1/cyclin-T1), HEXIM1, HEXIM2, BCDIN3, SART3 proteins and 7SK and U6 snRNAs. Interacts (via central region) with ZMYND8 (via N-terminus); the interaction is direct and the association appears to occur between homodimeric ZMYND8 and the activated form of the P-TEFb complex. Interacts with BRD4, targets chromatin binding. Interacts with JMJD6. Interacts with MDFIC. Interacts with HSF1. Interacts with HTATSF1. Interacts with TBX21. ADP-ribosylation on serine residues by PARP1 in response to DNA damage disrupts the phase separation activity of CCNT1, thereby preventing activation of CDK9.

The protein localises to the nucleus. Functionally, regulatory subunit of the cyclin-dependent kinase pair (CDK9/cyclin-T1) complex, also called positive transcription elongation factor B (P-TEFb), which facilitates the transition from abortive to productive elongation by phosphorylating the CTD (C-terminal domain) of the large subunit of RNA polymerase II (RNA Pol II). Required to activate the protein kinase activity of CDK9: acts by mediating formation of liquid-liquid phase separation (LLPS) that enhances binding of P-TEFb to the CTD of RNA Pol II. The polypeptide is Cyclin-T1 (Ccnt1) (Mus musculus (Mouse)).